We begin with the raw amino-acid sequence, 288 residues long: Elongation factor Ts (288 aa).

Positions 82–85 (TDFV) are involved in Mg(2+) ion dislocation from EF-Tu.

This sequence belongs to the EF-Ts family.

The protein resides in the cytoplasm. Functionally, associates with the EF-Tu.GDP complex and induces the exchange of GDP to GTP. It remains bound to the aminoacyl-tRNA.EF-Tu.GTP complex up to the GTP hydrolysis stage on the ribosome. The protein is Elongation factor Ts of Chlorobium phaeobacteroides (strain BS1).